Reading from the N-terminus, the 144-residue chain is Short-chain diamines transporter (144 aa).

Transmembrane regions (helical) follow at residues 9 to 29 (IHAI…LSFI), 35 to 55 (EVTG…NMIF), 76 to 96 (ILHA…MIAY), and 103 to 123 (IDAF…TFIF).

Belongs to the proteobacterial antimicrobial compound efflux (PACE) (TC 2.A.117) family. In terms of assembly, exists in a monomer-homodimer equilibrium. The dimer is probably the functional form of the protein, and the assembly of the dimer is mediated by binding of chlorhexidine and promoted by high pH conditions.

The protein localises to the cell inner membrane. With respect to regulation, protonation/deprotonation of Glu-15 may play an important role in transporter function. Cadaverin transport is inhibited in the presence of CCCP. Its function is as follows. Mediates the efflux of short-chain diamines when energized by an electrochemical gradient. Recognizes specifically the short-chain diamines cadaverine and putrescine as substrates, and promotes the active transport of these substrates in exchange for a cation. Protons are probably the primary source of energy for transport, however it was not possible to conclude with complete certainty that protons, rather than alternative cations such as Na(+) ions, are exchanged for substrates by AceI. In addition, is involved in resistance to the synthetic biocide chlorhexidine, a widely used antiseptic and disinfectant in both hospital and community settings. Interacts directly with chlorhexidine and mediates its efflux via an energy-dependent mechanism. In Acinetobacter baumannii (strain ATCC 17978 / DSM 105126 / CIP 53.77 / LMG 1025 / NCDC KC755 / 5377), this protein is Short-chain diamines transporter.